Reading from the N-terminus, the 443-residue chain is 3-phosphoshikimate 1-carboxyvinyltransferase (443 aa).

Residues lysine 25, serine 26, and arginine 30 each contribute to the 3-phosphoshikimate site. Lysine 25 is a phosphoenolpyruvate binding site. Phosphoenolpyruvate is bound by residues glycine 117 and arginine 145. 6 residues coordinate 3-phosphoshikimate: serine 188, serine 189, glutamine 190, serine 217, glutamate 331, and histidine 358. Phosphoenolpyruvate is bound at residue glutamine 190. The Proton acceptor role is filled by glutamate 331. Positions 362, 404, and 428 each coordinate phosphoenolpyruvate.

This sequence belongs to the EPSP synthase family. Monomer.

The protein resides in the cytoplasm. It catalyses the reaction 3-phosphoshikimate + phosphoenolpyruvate = 5-O-(1-carboxyvinyl)-3-phosphoshikimate + phosphate. Its pathway is metabolic intermediate biosynthesis; chorismate biosynthesis; chorismate from D-erythrose 4-phosphate and phosphoenolpyruvate: step 6/7. Catalyzes the transfer of the enolpyruvyl moiety of phosphoenolpyruvate (PEP) to the 5-hydroxyl of shikimate-3-phosphate (S3P) to produce enolpyruvyl shikimate-3-phosphate and inorganic phosphate. This is 3-phosphoshikimate 1-carboxyvinyltransferase from Tropheryma whipplei (strain TW08/27) (Whipple's bacillus).